The primary structure comprises 355 residues: D-alanine--D-alanine ligase (355 aa).

An ATP-grasp domain is found at 143 to 350 (KTIFSNLKIP…IEQLVAKLVD (208 aa)). 178–233 (LKKLNFPFFVKPSNSGSSLGISKVINESEILQSLEKAQKIDSRILVEEGLEVREIE) is an ATP binding site. Mg(2+) is bound by residues Asp-303, Glu-317, and Asn-319.

Belongs to the D-alanine--D-alanine ligase family. Mg(2+) is required as a cofactor. It depends on Mn(2+) as a cofactor.

Its subcellular location is the cytoplasm. It catalyses the reaction 2 D-alanine + ATP = D-alanyl-D-alanine + ADP + phosphate + H(+). It participates in cell wall biogenesis; peptidoglycan biosynthesis. Cell wall formation. The polypeptide is D-alanine--D-alanine ligase (Prochlorococcus marinus (strain MIT 9215)).